A 305-amino-acid polypeptide reads, in one-letter code: Methionyl-tRNA formyltransferase (305 aa).

A (6S)-5,6,7,8-tetrahydrofolate-binding site is contributed by 111-114; it reads SILP.

Belongs to the Fmt family.

The enzyme catalyses L-methionyl-tRNA(fMet) + (6R)-10-formyltetrahydrofolate = N-formyl-L-methionyl-tRNA(fMet) + (6S)-5,6,7,8-tetrahydrofolate + H(+). Functionally, attaches a formyl group to the free amino group of methionyl-tRNA(fMet). The formyl group appears to play a dual role in the initiator identity of N-formylmethionyl-tRNA by promoting its recognition by IF2 and preventing the misappropriation of this tRNA by the elongation apparatus. This chain is Methionyl-tRNA formyltransferase, found in Wolinella succinogenes (strain ATCC 29543 / DSM 1740 / CCUG 13145 / JCM 31913 / LMG 7466 / NCTC 11488 / FDC 602W) (Vibrio succinogenes).